The chain runs to 138 residues: Glutaredoxin-like protein C5orf63 (138 aa).

Cysteine 41 and cysteine 44 are oxidised to a cystine. Positions 55 to 64 are enriched in basic and acidic residues; that stretch reads ENRQPYKDQK. The tract at residues 55-88 is disordered; it reads ENRQPYKDQKLPGTRRRRSPSSPSHPHMASQSGK.

It belongs to the glutaredoxin family. YDR286C subfamily.

The sequence is that of Glutaredoxin-like protein C5orf63 (C5orf63) from Homo sapiens (Human).